The following is a 272-amino-acid chain: GATA zinc finger domain-containing protein 1 (272 aa).

The segment at Cys9–Cys33 adopts a GATA-type zinc-finger fold. Residues Thr67 to Arg120 form a disordered region. At Lys167 the chain carries N6-acetyllysine. Lys265 is covalently cross-linked (Glycyl lysine isopeptide (Lys-Gly) (interchain with G-Cter in SUMO2)).

It localises to the nucleus. The protein is GATA zinc finger domain-containing protein 1 (GATAD1) of Bos taurus (Bovine).